The sequence spans 179 residues: Segregation and condensation protein B (179 aa).

The protein belongs to the ScpB family. As to quaternary structure, homodimer. Homodimerization may be required to stabilize the binding of ScpA to the Smc head domains. Component of a cohesin-like complex composed of ScpA, ScpB and the Smc homodimer, in which ScpA and ScpB bind to the head domain of Smc. The presence of the three proteins is required for the association of the complex with DNA.

Its subcellular location is the cytoplasm. Participates in chromosomal partition during cell division. May act via the formation of a condensin-like complex containing Smc and ScpA that pull DNA away from mid-cell into both cell halves. The chain is Segregation and condensation protein B from Streptococcus equi subsp. equi (strain 4047).